Consider the following 184-residue polypeptide: dCTP deaminase (184 aa).

DCTP contacts are provided by residues 107–112 (KSTYAR), 131–133 (TLE), Gln152, Tyr166, and Gln176. The active-site Proton donor/acceptor is the Glu133.

The protein belongs to the dCTP deaminase family. In terms of assembly, homotrimer.

The catalysed reaction is dCTP + H2O + H(+) = dUTP + NH4(+). It functions in the pathway pyrimidine metabolism; dUMP biosynthesis; dUMP from dCTP (dUTP route): step 1/2. Functionally, catalyzes the deamination of dCTP to dUTP. This chain is dCTP deaminase, found in Rhizorhabdus wittichii (strain DSM 6014 / CCUG 31198 / JCM 15750 / NBRC 105917 / EY 4224 / RW1) (Sphingomonas wittichii).